The primary structure comprises 64 residues: UPF0370 protein YPA_2246 (64 aa).

Residues 3–23 (WLADYWWIILILLVGMILNGI) form a helical membrane-spanning segment. Residues 36–47 (DNKPELPPHRDN) show a composition bias toward basic and acidic residues. The tract at residues 36–64 (DNKPELPPHRDNNAQWDDEDDWPDQNKKK) is disordered.

Belongs to the UPF0370 family.

It localises to the cell membrane. The protein is UPF0370 protein YPA_2246 of Yersinia pestis bv. Antiqua (strain Antiqua).